Here is a 156-residue protein sequence, read N- to C-terminus: Arginine repressor (156 aa).

Belongs to the ArgR family.

Its subcellular location is the cytoplasm. It participates in amino-acid biosynthesis; L-arginine biosynthesis [regulation]. In terms of biological role, regulates arginine biosynthesis genes. The polypeptide is Arginine repressor (Proteus mirabilis (strain HI4320)).